The following is a 257-amino-acid chain: Pimeloyl-[acyl-carrier protein] methyl ester esterase (257 aa).

Residues 16–242 (LVLLHGWGLN…AAHAPFISHP (227 aa)) enclose the AB hydrolase-1 domain. Residues tryptophan 22, 82–83 (SL), and 143–147 (FLGLQ) contribute to the substrate site. Serine 82 acts as the Nucleophile in catalysis. Active-site residues include aspartate 207 and histidine 235. Histidine 235 is a substrate binding site.

It belongs to the AB hydrolase superfamily. Carboxylesterase BioH family. As to quaternary structure, monomer.

Its subcellular location is the cytoplasm. The enzyme catalyses 6-carboxyhexanoyl-[ACP] methyl ester + H2O = 6-carboxyhexanoyl-[ACP] + methanol + H(+). It participates in cofactor biosynthesis; biotin biosynthesis. In terms of biological role, the physiological role of BioH is to remove the methyl group introduced by BioC when the pimeloyl moiety is complete. It allows to synthesize pimeloyl-ACP via the fatty acid synthetic pathway through the hydrolysis of the ester bonds of pimeloyl-ACP esters. This is Pimeloyl-[acyl-carrier protein] methyl ester esterase from Sodalis glossinidius (strain morsitans).